Here is a 202-residue protein sequence, read N- to C-terminus: Adenylyl-sulfate kinase (202 aa).

31–38 contacts ATP; that stretch reads GLSASGKS. Ser-105 (phosphoserine intermediate) is an active-site residue.

Belongs to the APS kinase family.

The catalysed reaction is adenosine 5'-phosphosulfate + ATP = 3'-phosphoadenylyl sulfate + ADP + H(+). It participates in sulfur metabolism; hydrogen sulfide biosynthesis; sulfite from sulfate: step 2/3. Its function is as follows. Catalyzes the synthesis of activated sulfate. The protein is Adenylyl-sulfate kinase (MET14) of Saccharomyces bayanus (Yeast).